Consider the following 466-residue polypeptide: Cysteine--tRNA ligase (466 aa).

A Zn(2+)-binding site is contributed by cysteine 28. A 'HIGH' region motif is present at residues 30–40 (PTVYNFFHIGN). 3 residues coordinate Zn(2+): cysteine 208, histidine 233, and glutamate 237. The 'KMSKS' region motif lies at 265-269 (KMSKS). Residue lysine 268 coordinates ATP.

Belongs to the class-I aminoacyl-tRNA synthetase family. In terms of assembly, monomer. The cofactor is Zn(2+).

The protein localises to the cytoplasm. The enzyme catalyses tRNA(Cys) + L-cysteine + ATP = L-cysteinyl-tRNA(Cys) + AMP + diphosphate. The polypeptide is Cysteine--tRNA ligase (Clostridium perfringens (strain SM101 / Type A)).